A 162-amino-acid chain; its full sequence is Cytochrome c-type biogenesis protein CcmE (162 aa).

Residues 1 to 8 (MNPVRKKR) are Cytoplasmic-facing. A helical; Signal-anchor for type II membrane protein membrane pass occupies residues 9–29 (LIIVLAILVGVGAAVGLALSA). At 30 to 162 (LQQNINLFYT…GETSYNQEGK (133 aa)) the chain is on the periplasmic side. Residues His124 and Tyr128 each coordinate heme. Residues 139–148 (DSGQLKHYEN) show a composition bias toward basic and acidic residues. Residues 139 to 162 (DSGQLKHYENGKAAGETSYNQEGK) are disordered.

This sequence belongs to the CcmE/CycJ family.

The protein localises to the cell inner membrane. Its function is as follows. Heme chaperone required for the biogenesis of c-type cytochromes. Transiently binds heme delivered by CcmC and transfers the heme to apo-cytochromes in a process facilitated by CcmF and CcmH. The chain is Cytochrome c-type biogenesis protein CcmE from Pseudomonas paraeruginosa (strain DSM 24068 / PA7) (Pseudomonas aeruginosa (strain PA7)).